The following is a 477-amino-acid chain: MTEQNLHWLSATEMAASVASNNLSPNEIAEAMIQRVDAVNPSINAIVQFDREQVTRDAAELSRQQEAGEKLGPLHGVPFTIKDLTAVDGLPTTFGMKPMADNIATGNAVVVDRLRGAGGLFLGKTNTPESGYYGGTDNHLYGPTHNPWKLGNSAGGSSGGASAAVAAGLGPLAEGSDGAGSVRIPSALCGVVGLKPTTGVIPQTILAGRFYNWAYHGPITRTVADNALMLDIMAGPDNADPLSIERAETSYVEASKGDVKGLRVAWSPNLGLGHVDPEVLAVCLDALAAFEELGAQITEATPQWGNPSESMWSGIWVPGFASEYDLLDWENQRGEVDDYLIEIMHEAERLTGVDVGRADAFRGDMWDTWTTFMNDYDVLVSPTLASATFPLRQFAPSWLEGASLREQLLDWLFTYPYNMLNNPAITVPAGFTADGRPVGLQIAARHRRDALVLRTAANFEAVRPWADKKPADSLVVA.

Catalysis depends on charge relay system residues Lys82 and Ser157. Ser181 acts as the Acyl-ester intermediate in catalysis.

It belongs to the amidase family.

The catalysed reaction is a monocarboxylic acid amide + H2O = a monocarboxylate + NH4(+). The enzyme catalyses an anilide + H2O = aniline + a carboxylate + H(+). It carries out the reaction an N-acyl-L-amino acid + H2O = an L-alpha-amino acid + a carboxylate. It catalyses the reaction an N-acetyl-L-cysteine-S-conjugate + H2O = an S-substituted L-cysteine + acetate. With respect to regulation, amidase activity is completely suppressed by inhibitors of serine proteases (phenylmethylsulfonyl fluoride and diisopropyl fluorophosphate), partially inhibited by copper and mercury ions, but is not affected by inhibitors of aliphatic amidases (acetaldehyde and nitrophenyl disulfides) or by EDTA. Its function is as follows. Amidase with broad substrate specificity, catalyzing the hydrolysis of a wide range of N-substituted amides, and, to a lesser extent, the hydrolysis of non-substituted amides. Acid para-nitroanilides (4'-nitroacetanilide, Gly-pNA, Ala-pNA, Leu-pNA) are the best substrates for this enzyme. N-substituted acrylamides (isopropyl acrylamide, N,N-dimethyl-aminopropyl acrylamide, and methylene-bis-acrylamide), N-acetyl derivatives of glycine, alanine and leucine, and aliphatic amides (acetamide, acrylamide, isobutyramide, n-butyramide, and valeramide) can also be used as substrates but with less efficiency. This is Acylamidase from Rhodococcus erythropolis (Arthrobacter picolinophilus).